A 501-amino-acid polypeptide reads, in one-letter code: Ribose import ATP-binding protein RbsA (501 aa).

ABC transporter domains follow at residues 5–241 (LQLK…VGRK) and 252–495 (APGD…VGKL). 37-44 (GENGAGKS) is an ATP binding site.

This sequence belongs to the ABC transporter superfamily. Ribose importer (TC 3.A.1.2.1) family. The complex is composed of an ATP-binding protein (RbsA), two transmembrane proteins (RbsC) and a solute-binding protein (RbsB).

It localises to the cell inner membrane. It catalyses the reaction D-ribose(out) + ATP + H2O = D-ribose(in) + ADP + phosphate + H(+). Its function is as follows. Part of the ABC transporter complex RbsABC involved in ribose import. Responsible for energy coupling to the transport system. This Escherichia coli (strain K12) protein is Ribose import ATP-binding protein RbsA.